Reading from the N-terminus, the 383-residue chain is 8-amino-7-oxononanoate synthase (383 aa).

Residue arginine 22 coordinates substrate. 109–110 (GF) provides a ligand contact to pyridoxal 5'-phosphate. Residue histidine 134 coordinates substrate. Residues serine 178, histidine 206, and threonine 232 each coordinate pyridoxal 5'-phosphate. Lysine 235 carries the N6-(pyridoxal phosphate)lysine modification. Residue threonine 348 coordinates substrate.

It belongs to the class-II pyridoxal-phosphate-dependent aminotransferase family. BioF subfamily. As to quaternary structure, homodimer. Pyridoxal 5'-phosphate serves as cofactor.

It catalyses the reaction 6-carboxyhexanoyl-[ACP] + L-alanine + H(+) = (8S)-8-amino-7-oxononanoate + holo-[ACP] + CO2. It participates in cofactor biosynthesis; biotin biosynthesis. In terms of biological role, catalyzes the decarboxylative condensation of pimeloyl-[acyl-carrier protein] and L-alanine to produce 8-amino-7-oxononanoate (AON), [acyl-carrier protein], and carbon dioxide. The chain is 8-amino-7-oxononanoate synthase from Vibrio parahaemolyticus serotype O3:K6 (strain RIMD 2210633).